A 630-amino-acid chain; its full sequence is Plastin-1 (630 aa).

The interval 1-114 is fimbrin headpiece; sequence MENNVTTISR…LGGTSSISTE (114 aa). EF-hand domains are found at residues 11–46 and 51–86; these read EELE…ASLP and KVRE…LKSK. Residues D24, D26, S28, Y30, E35, D64, N66, D68, K70, and E75 each coordinate Ca(2+). Actin-binding stretches follow at residues 108–375 and 376–624; these read TSSI…LFNT and YPAL…LMGR. Positions 115–630 are fimbrin core; it reads GTQHSYSEEE…LMGRGLNKIK (516 aa). Calponin-homology (CH) domains lie at 122–238, 266–377, 396–505, and 517–626; these read EEEK…KVGL, LSPE…NTYP, SNEE…RRYT, and KVND…GRGL.

In terms of assembly, monomer. The N-terminus is blocked.

It is found in the cytoplasm. The protein resides in the cell projection. The protein localises to the stereocilium. Its function is as follows. Actin-bundling protein. In the inner ear, it is required for stereocilia formation. Mediates liquid packing of actin filaments that is necessary for stereocilia to grow to their proper dimensions. This is Plastin-1 (PLS1) from Gallus gallus (Chicken).